The following is a 328-amino-acid chain: Alanine racemase (328 aa).

Lys33 serves as the catalytic Proton acceptor; specific for D-alanine. Position 33 is an N6-(pyridoxal phosphate)lysine (Lys33). Arg118 is a binding site for substrate. Tyr237 acts as the Proton acceptor; specific for L-alanine in catalysis. Met283 lines the substrate pocket.

This sequence belongs to the alanine racemase family. Pyridoxal 5'-phosphate is required as a cofactor.

The enzyme catalyses L-alanine = D-alanine. It functions in the pathway amino-acid biosynthesis; D-alanine biosynthesis; D-alanine from L-alanine: step 1/1. In terms of biological role, catalyzes the interconversion of L-alanine and D-alanine. May also act on other amino acids. This is Alanine racemase (alr) from Campylobacter jejuni subsp. jejuni serotype O:6 (strain 81116 / NCTC 11828).